Consider the following 269-residue polypeptide: Xyloglucan endotransglucosylase/hydrolase protein 24 (269 aa).

A signal peptide spans 1-21 (MSPFKIFFFTTLLVAAFSVSA). The GH16 domain maps to 22-212 (ADFNTDVNVA…WSKAPFMASY (191 aa)). Residue E98 is the Nucleophile of the active site. Catalysis depends on E102, which acts as the Proton donor. Residue E102 coordinates xyloglucan. N-linked (GlcNAc...) asparagine glycosylation is present at N106. Xyloglucan is bound by residues 115–117 (HTN), 125–127 (DKE), 191–192 (DW), G196, and R256. An intrachain disulfide couples C251 to C265.

It belongs to the glycosyl hydrolase 16 family. XTH group 2 subfamily. Contains at least one intrachain disulfide bond essential for its enzymatic activity. In terms of processing, N-glycosylated; essential for its enzymatic activity. In terms of tissue distribution, highly expressed. Predominantly expressed in stems. Expressed in shoot apical meristems, also found in seedlings and meristems.

It is found in the secreted. It localises to the cell wall. The protein resides in the extracellular space. The protein localises to the apoplast. It catalyses the reaction breaks a beta-(1-&gt;4) bond in the backbone of a xyloglucan and transfers the xyloglucanyl segment on to O-4 of the non-reducing terminal glucose residue of an acceptor, which can be a xyloglucan or an oligosaccharide of xyloglucan.. Functionally, catalyzes xyloglucan endohydrolysis (XEH) and/or endotransglycosylation (XET). Cleaves and religates xyloglucan polymers, an essential constituent of the primary cell wall, and thereby participates in cell wall construction of growing tissues. May be required during development to modify the walls of cells under mechanical stress. This Arabidopsis thaliana (Mouse-ear cress) protein is Xyloglucan endotransglucosylase/hydrolase protein 24 (XTH24).